The chain runs to 461 residues: MSSTHQLVSSMISSSSSTFLAPSNFNLRTRNACLPMAKRVNTCKCVATPQEKIEYKTKVSRNSNMSKLQAGYLFPEIARRRSAHLLKYPDAQVISLGIGDTTEPIPEVITSAMAKKAHELSTIEGYSGYGAEQGAKPLRAAIAKTFYGGLGIGDDDVFVSDGAKCDISRLQVMFGSNVTIAVQDPSYPAYVDSSVIMGQTGQFNTDVQKYGNIEYMRCTPENGFFPDLSTVGRTDIIFFCSPNNPTGAAATREQLTQLVEFAKKNGSIIVYDSAYAMYMSDDNPRSIFEIPGAEEVAMETASFSKYAGFTGVRLGWTVIPKKLLYSDGFPVAKDFNRIICTCFNGASNISQAGALACLTPEGLEAMHKVIGFYKENTNIIIDTFTSLGYDVYGGKNAPYVWVHFPNQSSWDVFAEILEKTHVVTTPGSGFGPGGEGFVRVSAFGHRENILEACRRFKQLYK.

The transit peptide at 1–45 (MSSTHQLVSSMISSSSSTFLAPSNFNLRTRNACLPMAKRVNTCKC) directs the protein to the chloroplast. Tyr-72 and Gly-99 together coordinate substrate. Residues Tyr-129, 163 to 164 (AK), Tyr-187, Asn-244, Tyr-275, and 302 to 304 (SFS) contribute to the pyridoxal 5'-phosphate site. 3 residues coordinate substrate: Lys-164, Tyr-187, and Asn-244. Lys-305 is modified (N6-(pyridoxal phosphate)lysine). Residues Arg-313 and Asn-344 each contribute to the pyridoxal 5'-phosphate site. Substrate-binding residues include Asn-344 and Arg-439.

The protein belongs to the class-I pyridoxal-phosphate-dependent aminotransferase family. LL-diaminopimelate aminotransferase subfamily. Homodimer. It depends on pyridoxal 5'-phosphate as a cofactor. As to expression, highly expressed in seedlings, roots, stems, flowers and leaves. Lower expression in siliques.

Its subcellular location is the plastid. The protein localises to the chloroplast. It carries out the reaction (2S,6S)-2,6-diaminopimelate + 2-oxoglutarate = (S)-2,3,4,5-tetrahydrodipicolinate + L-glutamate + H2O + H(+). It functions in the pathway amino-acid biosynthesis; L-lysine biosynthesis via DAP pathway; LL-2,6-diaminopimelate from (S)-tetrahydrodipicolinate (aminotransferase route): step 1/1. In terms of biological role, required for lysine biosynthesis. Catalyzes the direct conversion of tetrahydrodipicolinate to LL-diaminopimelate, a reaction that requires three enzymes in E.coli. Not active with meso-diaminopimelate, lysine or ornithine as substrates. The sequence is that of LL-diaminopimelate aminotransferase, chloroplastic (DAP) from Arabidopsis thaliana (Mouse-ear cress).